Consider the following 337-residue polypeptide: PHD finger protein 11 (337 aa).

Residues 25–61 form a C2HC pre-PHD-type zinc finger; it reads KRTCALCPEGHEWSQIYFSPSGNIVAHENCLLYSSGL. The segment at 91–143 adopts a PHD-type zinc-finger fold; the sequence is LKCSFCNKGGATVGCDLWFCKKSYHYVCAKKDQAILQVDGNHGTYKLFCPEHS. 2 disordered regions span residues 145-196 and 301-337; these read EQEE…HGHT and GDLD…GDSL. Residues 187-196 show a composition bias toward basic and acidic residues; it reads HMTEEPHGHT. Polar residues-rich tracts occupy residues 301 to 312 and 323 to 337; these read GDLDCSSSTSGS and SQES…GDSL.

In terms of assembly, interacts with BRCA1 and RELA.

It localises to the nucleus. Functionally, positive regulator of Th1-type cytokine gene expression. The sequence is that of PHD finger protein 11 (Phf11) from Mus musculus (Mouse).